Here is a 104-residue protein sequence, read N- to C-terminus: Nucleoid-associated protein DICTH_1981 (104 aa).

Positions 85–104 (KSAEKMGSLADGLPLPPGLF) are disordered.

It belongs to the YbaB/EbfC family. Homodimer.

The protein resides in the cytoplasm. It localises to the nucleoid. Its function is as follows. Binds to DNA and alters its conformation. May be involved in regulation of gene expression, nucleoid organization and DNA protection. This is Nucleoid-associated protein DICTH_1981 from Dictyoglomus thermophilum (strain ATCC 35947 / DSM 3960 / H-6-12).